We begin with the raw amino-acid sequence, 428 residues long: Serine hydroxymethyltransferase (428 aa).

(6S)-5,6,7,8-tetrahydrofolate contacts are provided by residues L127 and G131–L133. At K236 the chain carries N6-(pyridoxal phosphate)lysine.

It belongs to the SHMT family. As to quaternary structure, homodimer. Requires pyridoxal 5'-phosphate as cofactor.

It localises to the cytoplasm. It catalyses the reaction (6R)-5,10-methylene-5,6,7,8-tetrahydrofolate + glycine + H2O = (6S)-5,6,7,8-tetrahydrofolate + L-serine. It functions in the pathway one-carbon metabolism; tetrahydrofolate interconversion. The protein operates within amino-acid biosynthesis; glycine biosynthesis; glycine from L-serine: step 1/1. Functionally, catalyzes the reversible interconversion of serine and glycine with tetrahydrofolate (THF) serving as the one-carbon carrier. This reaction serves as the major source of one-carbon groups required for the biosynthesis of purines, thymidylate, methionine, and other important biomolecules. Also exhibits THF-independent aldolase activity toward beta-hydroxyamino acids, producing glycine and aldehydes, via a retro-aldol mechanism. This chain is Serine hydroxymethyltransferase, found in Tropheryma whipplei (strain TW08/27) (Whipple's bacillus).